The chain runs to 42 residues: Conodipine-M beta chain (42 aa).

In terms of assembly, heterodimer of an alpha and a beta chains; probably disulfide-linked. As to expression, expressed by the venom duct.

It localises to the secreted. In terms of biological role, heterodimer: conodipine-M catalyzes the calcium-dependent hydrolysis of the 2-acyl groups in 3-sn-phosphoglycerides. This activity may be supported by the alpha chain. Conodipine-M inhibits the binding of isradipine (a ligand specific for L-type calcium channel) to L-type calcium channels. The protein is Conodipine-M beta chain of Conus magus (Magical cone).